We begin with the raw amino-acid sequence, 314 residues long: tRNA dimethylallyltransferase (314 aa).

13–20 provides a ligand contact to ATP; that stretch reads GPTAVGKT. 15–20 is a substrate binding site; that stretch reads TAVGKT. The segment at 38–41 is interaction with substrate tRNA; it reads DSMQ.

This sequence belongs to the IPP transferase family. Monomer. Mg(2+) serves as cofactor.

It carries out the reaction adenosine(37) in tRNA + dimethylallyl diphosphate = N(6)-dimethylallyladenosine(37) in tRNA + diphosphate. In terms of biological role, catalyzes the transfer of a dimethylallyl group onto the adenine at position 37 in tRNAs that read codons beginning with uridine, leading to the formation of N6-(dimethylallyl)adenosine (i(6)A). In Bacillus velezensis (strain DSM 23117 / BGSC 10A6 / LMG 26770 / FZB42) (Bacillus amyloliquefaciens subsp. plantarum), this protein is tRNA dimethylallyltransferase.